The sequence spans 1088 residues: Serine/threonine-protein kinase 11-interacting protein (1088 aa).

8 LRR repeats span residues 109 to 130 (SLRHLELRGVPLHCLHGLRGIY), 132 to 152 (QLETLICSRSLQALEELLSAC), 164 to 185 (ALLSANFSYNALTALDSSLRLL), 187 to 209 (ALRFLNLSHNQVQDCQGFLMDLC), 210 to 231 (ELHHLDISYNRLHLVPRMGPSG), 233 to 254 (ALGVLILRGNELRSLHGLEQLR), 255 to 276 (NLRHLDLAYNLLEGHRELSPLW), and 280 to 301 (ELRKLYLEGNPLWFHPEHRAAT). Disordered regions lie at residues 335–407 (GLSP…SPAG) and 437–533 (LEPS…QKEV). Low complexity predominate over residues 346-367 (PVGSTPETSGGPDLSDSLSSGG). Positions 375–385 (HKVKSRVRVRR) are enriched in basic residues. 3 positions are modified to phosphoserine: S387, S389, and S392. A compositionally biased stretch (low complexity) spans 447–460 (TPTTSAPSAPPASS). The residue at position 470 (S470) is a Phosphoserine. A compositionally biased stretch (acidic residues) spans 508–529 (EEGEMVEQGEEEAGEEEEEEQD). A Phosphoserine modification is found at S599. Disordered stretches follow at residues 724–780 (TPNR…SPPP) and 978–1009 (DAAGSPAEPSPPAASGEASEKVPPSGPGPAVR). Positions 733 to 742 (EQSLAPSPSA) are enriched in polar residues. Over residues 750 to 759 (GHGDHLDRAK) the composition is skewed to basic and acidic residues. Phosphoserine occurs at positions 761, 773, and 777. Over residues 978 to 994 (DAAGSPAEPSPPAASGE) the composition is skewed to low complexity.

This sequence belongs to the STK11IP family. In terms of assembly, found in a ternary complex composed of STK11/LKB1, STK11IP and SMAD4. Interacts with STK11/LKB1 and SMAD4.

The protein localises to the cytoplasm. Functionally, may regulate STK11/LKB1 function by controlling its subcellular localization. In Homo sapiens (Human), this protein is Serine/threonine-protein kinase 11-interacting protein (STK11IP).